The following is a 2197-amino-acid chain: Protein sickie (2197 aa).

Positions 21-129 (RDYAEIYTDW…LFFALSRFKQ (109 aa)) constitute a Calponin-homology (CH) domain. Disordered stretches follow at residues 165–197 (GLRTPGSSLNQDKNQQEQQQQQQQQQTPQQLAQ), 235–311 (CPPD…PQKH), 331–646 (AASV…NKFH), 730–767 (GSSPGGSRFHDIDNGYLSEGSSGLNGPSSSAGGISPGK), 788–910 (RNSR…FGYV), 1094–1119 (GPGQMAGQMSGNESPYVQSPRMNRSN), and 1202–1223 (TAAGASVLSPTHGTTSAAGLVG). Residues 175 to 197 (QDKNQQEQQQQQQQQQTPQQLAQ) are compositionally biased toward low complexity. The span at 261 to 290 (SDFNTSRPNSPPTSNHTIQSLKSGNNNSLR) shows a compositional bias: polar residues. Residues 291 to 304 (PPSIKSGIPSPSSP) are compositionally biased toward low complexity. The span at 331–341 (AASVASKTQIQ) shows a compositional bias: polar residues. Composition is skewed to low complexity over residues 342 to 354 (SKRTSSSSGFSSA) and 379 to 398 (SVSSQKPQPKTKQSKLLAAQ). Positions 399–428 (QKKEQANKATKLDKKEKSPARSLNKEESGN) are enriched in basic and acidic residues. 4 stretches are compositionally biased toward polar residues: residues 429-441 (ESRSSTMGRTGKS), 561-570 (ANSQPTSHIS), 577-588 (EPSTPQHSSGIY), and 633-644 (SAPNTPTASPNK). 3 stretches are compositionally biased toward low complexity: residues 755–766 (GPSSSAGGISPG), 796–831 (SIGTAANGSSAASQASSSGGSTTTHAQNNNNNNNNN), and 887–904 (SSSKQGSPSSSSRTKGVP). The span at 1100 to 1119 (GQMSGNESPYVQSPRMNRSN) shows a compositional bias: polar residues. Residues 1262–1342 (YGNAEERQAH…RQTIELLRKQ (81 aa)) adopt a coiled-coil conformation. 2 disordered regions span residues 1373-1415 (QALG…SMCS) and 1455-1511 (KTSR…SPAK). Composition is skewed to polar residues over residues 1379–1399 (GSDQKPPNSGSQRAINANNGS) and 1406–1415 (RQHSTDSMCS). The span at 1455 to 1468 (KTSRHVGHHHHHNH) shows a compositional bias: basic residues. Residues 1556-1591 (SSASQLESLKEMMNKMRAEMMSLKHNNERLQKLVTT) are a coiled coil. Disordered stretches follow at residues 1600–1633 (SLGQAISPNGSVAGSSEVSRRYSLADSNSRPPME), 1648–1690 (CLPP…EAAP), and 2172–2197 (SEAQDQESDCASLDSNVTPESSAGAE). Positions 1603 to 1616 (QAISPNGSVAGSSE) are enriched in polar residues. Positions 1650–1663 (PPAPAPEQPPPPAP) are enriched in pro residues. The span at 2184 to 2197 (LDSNVTPESSAGAE) shows a compositional bias: polar residues.

It belongs to the Nav/unc-53 family.

Functionally, required for the immune deficiency pathway, which mediates responses to Gram-negative bacterial infection. Favors Rel activation and nuclear translocation. The polypeptide is Protein sickie (sick) (Drosophila melanogaster (Fruit fly)).